Reading from the N-terminus, the 321-residue chain is Zinc finger protein 524 (321 aa).

Composition is skewed to polar residues over residues 1-14 and 39-48; these read MDNPSSDPLPSTLS and ATTSNRTLKS. Disordered regions lie at residues 1–80 and 86–105; these read MDNP…DLLL and VPYTVPEGSAADGPQGSGSK. The segment at residues 49–59 is a DNA-binding region (a.T hook); that stretch reads SLPRKRGRPPR. C2H2-type zinc fingers lie at residues 109-131, 137-159, 165-187, and 193-216; these read HFCPVCLRAFPYLSDLERHSISH, HVCKDCGKTFKRSSHLRRHCNIH, FRCVLCPRRFREAGELAHHHRIH, and YQCPSCRVRFTEANTLRRHYKRKH. The interval 248 to 321 is disordered; that stretch reads GVQEESPEGK…PGAIGHPPVD (74 aa). Over residues 262-271 the composition is skewed to polar residues; it reads PISSTTSPLS. Residues 274–285 show a composition bias toward gly residues; the sequence is TAGGSAGAGRGQ.

The protein belongs to the krueppel C2H2-type zinc-finger protein family.

It is found in the nucleus. Its function is as follows. May be involved in transcriptional regulation. The chain is Zinc finger protein 524 (Znf524) from Mus musculus (Mouse).